Consider the following 78-residue polypeptide: Large ribosomal subunit protein bL28 (78 aa).

Belongs to the bacterial ribosomal protein bL28 family.

The polypeptide is Large ribosomal subunit protein bL28 (Thioalkalivibrio sulfidiphilus (strain HL-EbGR7)).